We begin with the raw amino-acid sequence, 171 residues long: Small ribosomal subunit protein uS5 (171 aa).

Residues 16 to 79 (LIEKIVFINR…ERARKDMALV (64 aa)) enclose the S5 DRBM domain.

Belongs to the universal ribosomal protein uS5 family. As to quaternary structure, part of the 30S ribosomal subunit. Contacts proteins S4 and S8.

With S4 and S12 plays an important role in translational accuracy. Functionally, located at the back of the 30S subunit body where it stabilizes the conformation of the head with respect to the body. The sequence is that of Small ribosomal subunit protein uS5 from Desulfotalea psychrophila (strain LSv54 / DSM 12343).